The primary structure comprises 357 residues: Serine/threonine-protein kinase nekl-2 (357 aa).

Positions 4–267 (YEKVRVVGRG…VSQLLSDPLV (264 aa)) constitute a Protein kinase domain. ATP-binding positions include 10-18 (VGRGAFGVC) and Lys-35. Asp-137 (proton acceptor) is an active-site residue. Over residues 281–290 (IEPPPTDKRK) the composition is skewed to basic and acidic residues. The segment at 281-357 (IEPPPTDKRK…QSRSQVHSKY (77 aa)) is disordered. 2 stretches are compositionally biased toward polar residues: residues 293 to 327 (ASLS…QLTP) and 336 to 357 (FFSS…HSKY).

This sequence belongs to the protein kinase superfamily. NEK Ser/Thr protein kinase family. NIMA subfamily. Requires Mg(2+) as cofactor. Expressed in hypodermal cells including in hyp7 syncytium but not in seam cells.

It localises to the cytoplasm. The enzyme catalyses L-seryl-[protein] + ATP = O-phospho-L-seryl-[protein] + ADP + H(+). It catalyses the reaction L-threonyl-[protein] + ATP = O-phospho-L-threonyl-[protein] + ADP + H(+). In terms of biological role, probable serine/threonine-protein kinase required for the completion of molting. May play a role in endocytosis in the hypodermis syncytium. This is Serine/threonine-protein kinase nekl-2 from Caenorhabditis elegans.